A 203-amino-acid chain; its full sequence is Ribonuclease HII (203 aa).

Residues 16–203 (ENIACCDEVG…HRKSFLNKIL (188 aa)) form the RNase H type-2 domain. A divalent metal cation contacts are provided by aspartate 22, glutamate 23, and aspartate 120.

This sequence belongs to the RNase HII family. Mn(2+) serves as cofactor. Requires Mg(2+) as cofactor.

Its subcellular location is the cytoplasm. The catalysed reaction is Endonucleolytic cleavage to 5'-phosphomonoester.. Endonuclease that specifically degrades the RNA of RNA-DNA hybrids. This is Ribonuclease HII from Alkaliphilus oremlandii (strain OhILAs) (Clostridium oremlandii (strain OhILAs)).